A 1268-amino-acid polypeptide reads, in one-letter code: Meiosis inhibitor protein 1 (1268 aa).

In terms of tissue distribution, strongly expressed in testis, weakly in brain, and not detected in spleen, liver, kidney, small intestine or colon.

Its function is as follows. Required for normal meiotic chromosome synapsis. May be involved in the formation of meiotic double-strand breaks (DSBs) in spermatocytes. The protein is Meiosis inhibitor protein 1 of Mus musculus (Mouse).